Here is a 351-residue protein sequence, read N- to C-terminus: 1-aminocyclopropane-1-carboxylate oxidase homolog 4 (351 aa).

The region spanning 200–304 (KSQYMVGQHY…AIVFSTFMRA (105 aa)) is the Fe2OG dioxygenase domain. Fe cation-binding residues include His224, Asp226, and His280. 2-oxoglutarate is bound at residue Arg291.

It belongs to the iron/ascorbate-dependent oxidoreductase family. Fe(2+) is required as a cofactor.

This chain is 1-aminocyclopropane-1-carboxylate oxidase homolog 4, found in Arabidopsis thaliana (Mouse-ear cress).